Reading from the N-terminus, the 320-residue chain is ATP-dependent 6-phosphofructokinase (320 aa).

An ATP-binding site is contributed by Gly12. Residues 22-26 and 55-60 contribute to the ADP site; these read RGVVR and RYSVSD. Residues 73–74 and 103–106 contribute to the ATP site; these read RF and GDGS. Residue Asp104 participates in Mg(2+) binding. 126 to 128 lines the substrate pocket; it reads TID. Asp128 functions as the Proton acceptor in the catalytic mechanism. ADP is bound at residue Arg155. Residues Arg163 and 170-172 contribute to the substrate site; that span reads MGR. ADP-binding positions include 186–188, Lys212, and 214–216; these read GCE and KKH. Substrate-binding positions include Glu223, Arg244, and 250 to 253; that span reads HIQR.

It belongs to the phosphofructokinase type A (PFKA) family. ATP-dependent PFK group I subfamily. Prokaryotic clade 'B1' sub-subfamily. In terms of assembly, homotetramer. Requires Mg(2+) as cofactor.

It is found in the cytoplasm. It carries out the reaction beta-D-fructose 6-phosphate + ATP = beta-D-fructose 1,6-bisphosphate + ADP + H(+). Its pathway is carbohydrate degradation; glycolysis; D-glyceraldehyde 3-phosphate and glycerone phosphate from D-glucose: step 3/4. With respect to regulation, allosterically activated by ADP and other diphosphonucleosides, and allosterically inhibited by phosphoenolpyruvate. Its function is as follows. Catalyzes the phosphorylation of D-fructose 6-phosphate to fructose 1,6-bisphosphate by ATP, the first committing step of glycolysis. This chain is ATP-dependent 6-phosphofructokinase, found in Cronobacter sakazakii (strain ATCC BAA-894) (Enterobacter sakazakii).